The primary structure comprises 37 residues: Large ribosomal subunit protein bL36 (37 aa).

The protein belongs to the bacterial ribosomal protein bL36 family.

In Photobacterium profundum (strain SS9), this protein is Large ribosomal subunit protein bL36.